The primary structure comprises 205 residues: Holliday junction branch migration complex subunit RuvA (205 aa).

The segment at 1–64 (MIGRLRGTLA…EDAHLLYGFH (64 aa)) is domain I. A domain II region spans residues 65-143 (EKRERELFRE…AWETSPAMFT (79 aa)). The segment at 144–153 (LVSDGPVPVS) is flexible linker. The interval 154–205 (GASTAEADAVSALVSLGYKPQEASKAVSAIKDKAGLSSEELIRRSLKGMITK) is domain III.

This sequence belongs to the RuvA family. As to quaternary structure, homotetramer. Forms an RuvA(8)-RuvB(12)-Holliday junction (HJ) complex. HJ DNA is sandwiched between 2 RuvA tetramers; dsDNA enters through RuvA and exits via RuvB. An RuvB hexamer assembles on each DNA strand where it exits the tetramer. Each RuvB hexamer is contacted by two RuvA subunits (via domain III) on 2 adjacent RuvB subunits; this complex drives branch migration. In the full resolvosome a probable DNA-RuvA(4)-RuvB(12)-RuvC(2) complex forms which resolves the HJ.

The protein resides in the cytoplasm. The RuvA-RuvB-RuvC complex processes Holliday junction (HJ) DNA during genetic recombination and DNA repair, while the RuvA-RuvB complex plays an important role in the rescue of blocked DNA replication forks via replication fork reversal (RFR). RuvA specifically binds to HJ cruciform DNA, conferring on it an open structure. The RuvB hexamer acts as an ATP-dependent pump, pulling dsDNA into and through the RuvAB complex. HJ branch migration allows RuvC to scan DNA until it finds its consensus sequence, where it cleaves and resolves the cruciform DNA. The chain is Holliday junction branch migration complex subunit RuvA from Pseudomonas putida (strain W619).